The following is a 101-amino-acid chain: Phosphoribosyl-AMP cyclohydrolase (101 aa).

A Mg(2+)-binding site is contributed by D71. A Zn(2+)-binding site is contributed by C72. Residues D73 and D75 each contribute to the Mg(2+) site. Zn(2+) contacts are provided by C88 and C95.

Belongs to the PRA-CH family. As to quaternary structure, homodimer. The cofactor is Mg(2+). Zn(2+) serves as cofactor.

It localises to the cytoplasm. The enzyme catalyses 1-(5-phospho-beta-D-ribosyl)-5'-AMP + H2O = 1-(5-phospho-beta-D-ribosyl)-5-[(5-phospho-beta-D-ribosylamino)methylideneamino]imidazole-4-carboxamide. The protein operates within amino-acid biosynthesis; L-histidine biosynthesis; L-histidine from 5-phospho-alpha-D-ribose 1-diphosphate: step 3/9. Functionally, catalyzes the hydrolysis of the adenine ring of phosphoribosyl-AMP. The sequence is that of Phosphoribosyl-AMP cyclohydrolase from Bacillus cereus (strain G9842).